Reading from the N-terminus, the 349-residue chain is DNA polymerase IV (349 aa).

Residues 4–185 (IIHIDCDCFY…LPVAKLHGVG (182 aa)) enclose the UmuC domain. 2 residues coordinate Mg(2+): Asp8 and Asp103. The active site involves Glu104.

Belongs to the DNA polymerase type-Y family. In terms of assembly, monomer. Requires Mg(2+) as cofactor.

The protein resides in the cytoplasm. The enzyme catalyses DNA(n) + a 2'-deoxyribonucleoside 5'-triphosphate = DNA(n+1) + diphosphate. In terms of biological role, poorly processive, error-prone DNA polymerase involved in untargeted mutagenesis. Copies undamaged DNA at stalled replication forks, which arise in vivo from mismatched or misaligned primer ends. These misaligned primers can be extended by PolIV. Exhibits no 3'-5' exonuclease (proofreading) activity. May be involved in translesional synthesis, in conjunction with the beta clamp from PolIII. This chain is DNA polymerase IV, found in Pseudomonas aeruginosa (strain UCBPP-PA14).